A 244-amino-acid polypeptide reads, in one-letter code: Probable transcriptional regulatory protein DNO_1179 (244 aa).

This sequence belongs to the TACO1 family.

Its subcellular location is the cytoplasm. The protein is Probable transcriptional regulatory protein DNO_1179 of Dichelobacter nodosus (strain VCS1703A).